The primary structure comprises 945 residues: Isoleucine--tRNA ligase (945 aa).

Residues 66 to 76 (PYANGDIHLGH) carry the 'HIGH' region motif. Glutamate 581 is an L-isoleucyl-5'-AMP binding site. Residues 622–626 (KMSKS) carry the 'KMSKS' region motif. An ATP-binding site is contributed by lysine 625. Residues cysteine 908, cysteine 911, cysteine 928, and cysteine 931 each contribute to the Zn(2+) site.

The protein belongs to the class-I aminoacyl-tRNA synthetase family. IleS type 1 subfamily. As to quaternary structure, monomer. It depends on Zn(2+) as a cofactor.

The protein resides in the cytoplasm. The enzyme catalyses tRNA(Ile) + L-isoleucine + ATP = L-isoleucyl-tRNA(Ile) + AMP + diphosphate. Its function is as follows. Catalyzes the attachment of isoleucine to tRNA(Ile). As IleRS can inadvertently accommodate and process structurally similar amino acids such as valine, to avoid such errors it has two additional distinct tRNA(Ile)-dependent editing activities. One activity is designated as 'pretransfer' editing and involves the hydrolysis of activated Val-AMP. The other activity is designated 'posttransfer' editing and involves deacylation of mischarged Val-tRNA(Ile). In Burkholderia vietnamiensis (strain G4 / LMG 22486) (Burkholderia cepacia (strain R1808)), this protein is Isoleucine--tRNA ligase.